A 265-amino-acid chain; its full sequence is MLMIISPAKTLDYTSPLAIQRYTQPQMLAQAETLMQTVRTLTPAQLGSLMKISDKLAGLNAARFTEWQPSFTPENARQAILAFKGDVYTGLQAETFSEQDFDFAQRHLCMLSGLYGVLRPLDLMMPYRLEMGTRLHTPYGNDLYAFWGDSITRQINQQLLQQGDRVVVNLASDEYFKAVRPAALEGELIKPIFMDEKNGSMKVISFYAKKARGMMSRFIIQARLREPEQLKAFDLEGYAFAGETQGRQGRELLFTRRHSAISPAR.

This sequence belongs to the UPF0246 family.

This chain is UPF0246 protein NT01EI_0662, found in Edwardsiella ictaluri (strain 93-146).